Reading from the N-terminus, the 96-residue chain is UPF0235 protein SO_3356 (96 aa).

It belongs to the UPF0235 family.

This is UPF0235 protein SO_3356 from Shewanella oneidensis (strain ATCC 700550 / JCM 31522 / CIP 106686 / LMG 19005 / NCIMB 14063 / MR-1).